We begin with the raw amino-acid sequence, 249 residues long: Nodulation protein H (249 aa).

Required for the formation of sulfated nod factor. Proposed to transfer activated sulfate (PAPS) to a N-acetylglucosamine of the nod factor. The protein is Nodulation protein H (nodH) of Rhizobium tropici.